Consider the following 2168-residue polypeptide: Genome polyprotein (2168 aa).

Positions 1 to 20 (MGMQMSKNTAGSHTTVTQAS) are disordered. The N-myristoyl glycine; by host moiety is linked to residue G2. Residues 2 to 1479 (GMQMSKNTAG…NVSIATTILS (1478 aa)) are Cytoplasmic-facing. Amphipathic alpha-helix regions lie at residues 551 to 567 (ALQAPVETALNSAISSV) and 554 to 575 (APVETALNSAISSVIAGITAQD). Polar residues predominate over residues 576-589 (TQPSSHNISTSETP). Positions 576–607 (TQPSSHNISTSETPALQAAETGASSNASDEGM) are disordered. Residues H856 and D874 each act as for protease 2A activity in the active site. Positions 891 and 893 each coordinate Zn(2+). The active-site For protease 2A activity is C945. Zn(2+) contacts are provided by C951 and H953. The segment at 1085-1157 (GDDWLKKFTS…EHSCPTTEQQ (73 aa)) is membrane-binding. The oligomerization stretch occupies residues 1085–1223 (GDDWLKKFTS…TAGTGKSLAT (139 aa)). The RNA-binding stretch occupies residues 1106–1110 (AEKIM). Residues 1189–1347 (EKRILGYIQF…YKTHNGTLDV (159 aa)) form the SF3 helicase domain. Residues C1354, C1365, and C1370 each coordinate Zn(2+). The C4-type; degenerate zinc-finger motif lies at 1354–1370 (CEDCCPANFKTCMPLIC). The interval 1397–1404 (EWKRRNQV) is RNA-binding. The interval 1408-1413 (YVRLFQ) is oligomerization. Residues 1480–1495 (SLVLLTSVITLVYLVY) lie within the membrane without spanning it. The Cytoplasmic segment spans residues 1496–2168 (RLFAGYQGPY…SLLREWYEKF (673 aa)). Y1505 is subject to O-(5'-phospho-RNA)-tyrosine. Positions 1525 to 1703 (GPLMDFGVGM…FCAALKRSYF (179 aa)) constitute a Peptidase C3 domain. Active-site for protease 3C activity residues include H1564, E1595, and C1671. The 115-residue stretch at 1934-2048 (GELFGFDYTA…ASYPYRIDPA (115 aa)) folds into the RdRp catalytic domain. 2 residues coordinate Mg(2+): D1940 and D2035.

It belongs to the picornaviruses polyprotein family. Interacts with capsid protein VP1 and capsid protein VP3 to form heterotrimeric protomers. As to quaternary structure, interacts with capsid protein VP0, and capsid protein VP3 to form heterotrimeric protomers. Five protomers subsequently associate to form pentamers which serve as building blocks for the capsid. Interacts with capsid protein VP2, capsid protein VP3 and capsid protein VP4 following cleavage of capsid protein VP0. In terms of assembly, interacts with capsid protein VP1 and capsid protein VP3 in the mature capsid. Interacts with capsid protein VP0 and capsid protein VP1 to form heterotrimeric protomers. Five protomers subsequently associate to form pentamers which serve as building blocks for the capsid. Interacts with capsid protein VP4 in the mature capsid. Interacts with protein 2C; this interaction may be important for virion morphogenesis. As to quaternary structure, interacts with capsid protein VP1 and capsid protein VP3. In terms of assembly, homodimer. Homohexamer; forms a hexameric ring structure with 6-fold symmetry characteristic of AAA+ ATPases. Interacts (via N-terminus) with host RTN3 (via reticulon domain); this interaction is important for viral replication. Interacts with capsid protein VP3; this interaction may be important for virion morphogenesis. As to quaternary structure, interacts with protein 3CD. In terms of assembly, homodimer. Interacts with host GBF1. Interacts (via GOLD domain) with host ACBD3 (via GOLD domain); this interaction allows the formation of a viral protein 3A/ACBD3 heterotetramer with a 2:2 stoichiometry, which will stimulate the recruitment of host PI4KB in order to synthesize PI4P at the viral RNA replication sites. Interacts with RNA-directed RNA polymerase. As to quaternary structure, interacts with protein 3AB and with RNA-directed RNA polymerase. In terms of assembly, interacts with Viral protein genome-linked and with protein 3CD. Mg(2+) is required as a cofactor. Post-translationally, specific enzymatic cleavages in vivo by the viral proteases yield processing intermediates and the mature proteins. In terms of processing, myristoylation is required for the formation of pentamers during virus assembly. Further assembly of 12 pentamers and a molecule of genomic RNA generates the provirion. During virion maturation, immature virions are rendered infectious following cleavage of VP0 into VP4 and VP2. This maturation seems to be an autocatalytic event triggered by the presence of RNA in the capsid and it is followed by a conformational change infectious virion. Post-translationally, myristoylation is required during RNA encapsidation and formation of the mature virus particle. In terms of processing, VPg is uridylylated by the polymerase into VPg-pUpU. This acts as a nucleotide-peptide primer for the genomic RNA replication.

It is found in the virion. Its subcellular location is the host cytoplasm. The protein resides in the host cytoplasmic vesicle membrane. It localises to the host nucleus. The enzyme catalyses a ribonucleoside 5'-triphosphate + H2O = a ribonucleoside 5'-diphosphate + phosphate + H(+). It catalyses the reaction Selective cleavage of Tyr-|-Gly bond in the picornavirus polyprotein.. The catalysed reaction is RNA(n) + a ribonucleoside 5'-triphosphate = RNA(n+1) + diphosphate. It carries out the reaction Selective cleavage of Gln-|-Gly bond in the poliovirus polyprotein. In other picornavirus reactions Glu may be substituted for Gln, and Ser or Thr for Gly.. With respect to regulation, replication or transcription is subject to high level of random mutations by the nucleotide analog ribavirin. Functionally, forms an icosahedral capsid of pseudo T=3 symmetry with capsid proteins VP2 and VP3. The capsid is 300 Angstroms in diameter, composed of 60 copies of each capsid protein and enclosing the viral positive strand RNA genome. Capsid protein VP1 mainly forms the vertices of the capsid. Capsid protein VP1 interacts with host cell receptor to provide virion attachment to target host cells. This attachment induces virion internalization. Tyrosine kinases are probably involved in the entry process. After binding to its receptor, the capsid undergoes conformational changes. Capsid protein VP1 N-terminus (that contains an amphipathic alpha-helix) and capsid protein VP4 are externalized. Together, they shape a pore in the host membrane through which viral genome is translocated to host cell cytoplasm. Forms an icosahedral capsid of pseudo T=3 symmetry with capsid proteins VP2 and VP3. The capsid is 300 Angstroms in diameter, composed of 60 copies of each capsid protein and enclosing the viral positive strand RNA genome. In terms of biological role, lies on the inner surface of the capsid shell. After binding to the host receptor, the capsid undergoes conformational changes. Capsid protein VP4 is released, Capsid protein VP1 N-terminus is externalized, and together, they shape a pore in the host membrane through which the viral genome is translocated into the host cell cytoplasm. Its function is as follows. Component of immature procapsids, which is cleaved into capsid proteins VP4 and VP2 after maturation. Allows the capsid to remain inactive before the maturation step. Functionally, cysteine protease that cleaves viral polyprotein and specific host proteins. It is responsible for the autocatalytic cleavage between the P1 and P2 regions, which is the first cleavage occurring in the polyprotein. Also cleaves the host translation initiation factor EIF4G1, in order to shut down the capped cellular mRNA translation. Inhibits the host nucleus-cytoplasm protein and RNA trafficking by cleaving host members of the nuclear pores. Counteracts stress granule formation probably by antagonizing its assembly or promoting its dissassembly. Plays an essential role in the virus replication cycle by acting as a viroporin. Creates a pore in the host endoplasmic reticulum and as a consequence releases Ca2+ in the cytoplasm of infected cell. In turn, high levels of cytoplasmic calcium may trigger membrane trafficking and transport of viral ER-associated proteins to viroplasms, sites of viral genome replication. In terms of biological role, induces and associates with structural rearrangements of intracellular membranes. Displays RNA-binding, nucleotide binding and NTPase activities. May play a role in virion morphogenesis and viral RNA encapsidation by interacting with the capsid protein VP3. Its function is as follows. Localizes the viral replication complex to the surface of membranous vesicles. Together with protein 3CD binds the Cis-Active RNA Element (CRE) which is involved in RNA synthesis initiation. Acts as a cofactor to stimulate the activity of 3D polymerase, maybe through a nucleid acid chaperone activity. Functionally, localizes the viral replication complex to the surface of membranous vesicles. It inhibits host cell endoplasmic reticulum-to-Golgi apparatus transport and causes the disassembly of the Golgi complex, possibly through GBF1 interaction. This would result in depletion of MHC, trail receptors and IFN receptors at the host cell surface. Plays an essential role in viral RNA replication by recruiting ACBD3 and PI4KB at the viral replication sites, thereby allowing the formation of the rearranged membranous structures where viral replication takes place. Acts as a primer for viral RNA replication and remains covalently bound to viral genomic RNA. VPg is uridylylated prior to priming replication into VPg-pUpU. The oriI viral genomic sequence may act as a template for this. The VPg-pUpU is then used as primer on the genomic RNA poly(A) by the RNA-dependent RNA polymerase to replicate the viral genome. During genome replication, the VPg-RNA linkage is removed by the host TDP2, thereby accelerating replication. During the late stage of the replication cycle, host TDP2 is excluded from sites of viral RNA synthesis and encapsidation, allowing for the generation of progeny virions. In terms of biological role, involved in the viral replication complex and viral polypeptide maturation. It exhibits protease activity with a specificity and catalytic efficiency that is different from protease 3C. Protein 3CD lacks polymerase activity. Protein 3CD binds to the 5'UTR of the viral genome. Its function is as follows. Replicates the viral genomic RNA on the surface of intracellular membranes. May form linear arrays of subunits that propagate along a strong head-to-tail interaction called interface-I. Covalently attaches UMP to a tyrosine of VPg, which is used to prime RNA synthesis. The positive stranded RNA genome is first replicated at virus induced membranous vesicles, creating a dsRNA genomic replication form. This dsRNA is then used as template to synthesize positive stranded RNA genomes. ss(+)RNA genomes are either translated, replicated or encapsidated. Functionally, major viral protease that mediates proteolytic processing of the polyprotein. Cleaves host EIF5B, contributing to host translation shutoff. Also cleaves host PABPC1, contributing to host translation shutoff. Cleaves host NLRP1, triggers host N-glycine-mediated degradation of the autoinhibitory NLRP1 N-terminal fragment. This is Genome polyprotein from Sus scrofa (Pig).